A 1414-amino-acid chain; its full sequence is DNA-directed RNA polymerase subunit beta' (1414 aa).

4 residues coordinate Zn(2+): Cys-70, Cys-72, Cys-85, and Cys-88. Mg(2+) is bound by residues Asp-460, Asp-462, and Asp-464. Zn(2+)-binding residues include Cys-814, Cys-888, Cys-895, and Cys-898. The segment covering 1392-1403 (EQALSEALKSSA) has biased composition (low complexity). The disordered stretch occupies residues 1392–1414 (EQALSEALKSSAPQEAKAAQKDE).

The protein belongs to the RNA polymerase beta' chain family. The RNAP catalytic core consists of 2 alpha, 1 beta, 1 beta' and 1 omega subunit. When a sigma factor is associated with the core the holoenzyme is formed, which can initiate transcription. Requires Mg(2+) as cofactor. Zn(2+) is required as a cofactor.

The catalysed reaction is RNA(n) + a ribonucleoside 5'-triphosphate = RNA(n+1) + diphosphate. Functionally, DNA-dependent RNA polymerase catalyzes the transcription of DNA into RNA using the four ribonucleoside triphosphates as substrates. This is DNA-directed RNA polymerase subunit beta' from Coxiella burnetii (strain RSA 331 / Henzerling II).